Consider the following 275-residue polypeptide: Ribosomal RNA small subunit methyltransferase A (275 aa).

Positions 28, 30, 55, 77, 103, and 123 each coordinate S-adenosyl-L-methionine.

The protein belongs to the class I-like SAM-binding methyltransferase superfamily. rRNA adenine N(6)-methyltransferase family. RsmA subfamily.

The protein localises to the cytoplasm. The catalysed reaction is adenosine(1518)/adenosine(1519) in 16S rRNA + 4 S-adenosyl-L-methionine = N(6)-dimethyladenosine(1518)/N(6)-dimethyladenosine(1519) in 16S rRNA + 4 S-adenosyl-L-homocysteine + 4 H(+). In terms of biological role, specifically dimethylates two adjacent adenosines (A1518 and A1519) in the loop of a conserved hairpin near the 3'-end of 16S rRNA in the 30S particle. May play a critical role in biogenesis of 30S subunits. The sequence is that of Ribosomal RNA small subunit methyltransferase A from Allorhizobium ampelinum (strain ATCC BAA-846 / DSM 112012 / S4) (Agrobacterium vitis (strain S4)).